The primary structure comprises 502 residues: Beta-glucosidase 7 (502 aa).

The first 22 residues, 1–22, serve as a signal peptide directing secretion; the sequence is MKPFSQFFVFVVTVSATSYIDA. A beta-D-glucoside contacts are provided by residues glutamine 42, histidine 140, and 185 to 186; that span reads NE. Glutamate 186 serves as the catalytic Proton donor. Asparagine 208 carries an N-linked (GlcNAc...) asparagine glycan. Tyrosine 325 contacts a beta-D-glucoside. An N-linked (GlcNAc...) asparagine glycan is attached at asparagine 359. Glutamate 392 contacts a beta-D-glucoside. The active-site Nucleophile is glutamate 392. N-linked (GlcNAc...) asparagine glycosylation occurs at asparagine 425. Positions 435 and 451 each coordinate a beta-D-glucoside. N-linked (GlcNAc...) asparagine glycosylation is found at asparagine 457 and asparagine 479.

Belongs to the glycosyl hydrolase 1 family.

It catalyses the reaction Hydrolysis of terminal, non-reducing beta-D-glucosyl residues with release of beta-D-glucose.. The protein is Beta-glucosidase 7 of Arabidopsis thaliana (Mouse-ear cress).